The chain runs to 293 residues: MSDNSTGTTKSRSNVDDVQAHYDLSDAFFALFQDPTRTYSCAYFERDDMTLHEAQVAKLDLTLGKLGLEPGMTLLDVGCGWGSVMKRAVERYDVNVVGLTLSKNQHAYCQQVLDKVDTNRSHRVLLSDWANFSEPVDRIVTIEAIEHFGFERYDDFFKFAYNAMPADGVMLLHSITGLHVKQVIERGIPLTMEMAKFIRFIVTDIFPGGRLPTIETIEEHVTKAGFTITDIQSLQPHFARTLDLWAEALQAHKDEAIEIQSAEVYERYMKYLTGCAKAFRMGYIDCNQFTLAK.

S-adenosyl-L-methionine is bound by residues 39–40, 78–80, 100–105, 129–130, and isoleucine 142; these read YS, GCG, TLSKNQ, and WA. Residue cysteine 275 is part of the active site.

Belongs to the CFA/CMAS family.

It functions in the pathway lipid metabolism; mycolic acid biosynthesis. In terms of biological role, involved in the biosynthesis of methoxymycolic acid. It catalyzes the O-methylation of the hydroxy group of the hydroxymycolate to form a methyl ether. The sequence is that of Methoxy mycolic acid synthase MmaA3 (cmaB) from Mycobacterium bovis (strain ATCC BAA-935 / AF2122/97).